A 333-amino-acid polypeptide reads, in one-letter code: Procathepsin L (333 aa).

The signal sequence occupies residues 1 to 17 (MNPTFILAALCLGIASA). Positions 18–113 (TLTFNHSLEA…KVFQEPLFYE (96 aa)) are cleaved as a propeptide — activation peptide. E122 contacts Zn(2+). Cystine bridges form between C135–C178 and C169–C211. C138 is an active-site residue. E163, D184, E199, E205, E209, D227, D250, H253, D273, and D275 together coordinate Zn(2+). C269 and C322 are oxidised to a cystine. H276 is a catalytic residue. The propeptide occupies 289–291 (ESD). The active site involves N300.

Belongs to the peptidase C1 family. Dimer of a heavy and a light chain linked by disulfide bonds. Interacts with Long isoform of CD74/Ii chain; the interaction stabilizes the conformation of mature CTSL. During export along the endocytic pathway, pro-CTSL undergoes several proteolytic cleavages to generate the CTSL single-chain and two-chain mature forms, composed of a heavy chain linked to a light chain by disulfide bonds. Autocleavage; produces the single-chain CTSL after cleavage of the propeptide. The cleavage can be intermolecular.

It localises to the lysosome. Its subcellular location is the apical cell membrane. The protein resides in the cytoplasmic vesicle. It is found in the secretory vesicle. The protein localises to the chromaffin granule. It localises to the secreted. Its subcellular location is the extracellular space. It catalyses the reaction Specificity close to that of papain. As compared to cathepsin B, cathepsin L exhibits higher activity toward protein substrates, but has little activity on Z-Arg-Arg-NHMec, and no peptidyl-dipeptidase activity.. Its activity is regulated as follows. Inhibited by the propeptide produced by autocleavage. Long isoform of CD74/Ii chain stabilizes the conformation of mature CTSL by binding to its active site and serving as a chaperone to help maintain a pool of mature enzyme in endocytic compartments and extracellular space of APCs. IFNG enhances the conversion into the CTSL mature and active form. Inhibited by CST6. Inhibited by the glycopeptide antibiotic teicoplanin. Inhibited by amantadine. Its function is as follows. Thiol protease important for the overall degradation of proteins in lysosomes. Plays a critical for normal cellular functions such as general protein turnover, antigen processing and bone remodeling. Involved in the solubilization of cross-linked TG/thyroglobulin and in the subsequent release of thyroid hormone thyroxine (T4) by limited proteolysis of TG/thyroglobulin in the thyroid follicle lumen. In neuroendocrine chromaffin cells secretory vesicles, catalyzes the prohormone proenkephalin processing to the active enkephalin peptide neurotransmitter. In thymus, regulates CD4(+) T cell positive selection by generating the major histocompatibility complex class II (MHCII) bound peptide ligands presented by cortical thymic epithelial cells. Also mediates invariant chain processing in cortical thymic epithelial cells. Major elastin-degrading enzyme at neutral pH. Accumulates as a mature and active enzyme in the extracellular space of antigen presenting cells (APCs) to regulate degradation of the extracellular matrix in the course of inflammation. Secreted form generates endostatin from COL18A1. Critical for cardiac morphology and function. Plays an important role in hair follicle morphogenesis and cycling, as well as epidermal differentiation. Required for maximal stimulation of steroidogenesis by TIMP1. This is Procathepsin L (CTSL) from Chlorocebus aethiops (Green monkey).